Consider the following 144-residue polypeptide: Nucleoside diphosphate kinase (144 aa).

The ATP site is built by Lys11, Phe59, Arg87, Thr93, Arg104, and Asn114. The active-site Pros-phosphohistidine intermediate is His117.

Belongs to the NDK family. In terms of assembly, homotetramer. Mg(2+) is required as a cofactor.

The protein resides in the cytoplasm. The catalysed reaction is a 2'-deoxyribonucleoside 5'-diphosphate + ATP = a 2'-deoxyribonucleoside 5'-triphosphate + ADP. It catalyses the reaction a ribonucleoside 5'-diphosphate + ATP = a ribonucleoside 5'-triphosphate + ADP. In terms of biological role, major role in the synthesis of nucleoside triphosphates other than ATP. The ATP gamma phosphate is transferred to the NDP beta phosphate via a ping-pong mechanism, using a phosphorylated active-site intermediate. This chain is Nucleoside diphosphate kinase, found in Aliivibrio salmonicida (strain LFI1238) (Vibrio salmonicida (strain LFI1238)).